The sequence spans 107 residues: Phosphoribosyl-ATP pyrophosphatase (107 aa).

The protein belongs to the PRA-PH family.

It is found in the cytoplasm. The enzyme catalyses 1-(5-phospho-beta-D-ribosyl)-ATP + H2O = 1-(5-phospho-beta-D-ribosyl)-5'-AMP + diphosphate + H(+). The protein operates within amino-acid biosynthesis; L-histidine biosynthesis; L-histidine from 5-phospho-alpha-D-ribose 1-diphosphate: step 2/9. This is Phosphoribosyl-ATP pyrophosphatase from Zymomonas mobilis subsp. mobilis (strain ATCC 31821 / ZM4 / CP4).